A 351-amino-acid polypeptide reads, in one-letter code: Ubiquinol oxidase 4, chloroplastic/chromoplastic (351 aa).

The N-terminal 56 residues, 1-56 (MAAISGISSGTLTISRPLVTLRRSRAAVSYSSSHRLLHHLPLSSRRLLLRNNHRVQ), are a transit peptide targeting the chloroplast and chromoplast. The segment at 71–91 (ESFKAETSTGTEPLEEPNMSS) is disordered. A helical transmembrane segment spans residues 132–152 (FFVLETIARVPYFAFMSVLHM). Fe cation is bound by residues glutamate 136, glutamate 175, and histidine 178. A helical transmembrane segment spans residues 195-215 (FLAQHIATFYYFMTVFLYILS). Fe cation-binding residues include glutamate 227, glutamate 296, and histidine 299.

Belongs to the alternative oxidase family. Fe cation serves as cofactor. Ubiquitous.

Its subcellular location is the plastid. The protein localises to the chloroplast thylakoid membrane. The protein resides in the chromoplast membrane. The catalysed reaction is 2 a ubiquinol + O2 = 2 a ubiquinone + 2 H2O. Functionally, acts early in chloroplast biogenesis as a component of a redox chain responsible for phytoene desaturation. Prevents the generation of toxic oxygen radicals and photooxidation of the nascent photosynthetic apparatus. Involved in the differentiation of multiple plastid types, including chloroplasts, amyloplasts, and etioplasts. Might participate in the chloroplast respiratory chain. The chain is Ubiquinol oxidase 4, chloroplastic/chromoplastic (AOX4) from Arabidopsis thaliana (Mouse-ear cress).